The primary structure comprises 369 residues: Molybdenum import ATP-binding protein ModC (369 aa).

An ABC transporter domain is found at Thr-3 to Ser-246. Gly-44–Thr-51 lines the ATP pocket. Positions Asp-305–Gly-369 constitute a Mop domain.

It belongs to the ABC transporter superfamily. Molybdate importer (TC 3.A.1.8) family. The complex is composed of two ATP-binding proteins (ModC), two transmembrane proteins (ModB) and a solute-binding protein (ModA).

It is found in the cell inner membrane. It carries out the reaction molybdate(out) + ATP + H2O = molybdate(in) + ADP + phosphate + H(+). Its function is as follows. Part of the ABC transporter complex ModABC involved in molybdenum import. Responsible for energy coupling to the transport system. The chain is Molybdenum import ATP-binding protein ModC from Albidiferax ferrireducens (strain ATCC BAA-621 / DSM 15236 / T118) (Rhodoferax ferrireducens).